A 219-amino-acid chain; its full sequence is Probable GTP-binding protein EngB (219 aa).

In terms of domain architecture, EngB-type G spans valine 31 to proline 205. GTP is bound by residues glycine 39–serine 46, glycine 66–leucine 70, aspartate 84–glycine 87, threonine 151–aspartate 154, and phenylalanine 184–serine 186. Serine 46 and threonine 68 together coordinate Mg(2+).

It belongs to the TRAFAC class TrmE-Era-EngA-EngB-Septin-like GTPase superfamily. EngB GTPase family. Mg(2+) is required as a cofactor.

Its function is as follows. Necessary for normal cell division and for the maintenance of normal septation. The polypeptide is Probable GTP-binding protein EngB (Shewanella baltica (strain OS223)).